The sequence spans 138 residues: MMNAEAKPGDWLGKVRWDANGLVPVIAQDAATNDVLMFAWMNRDALAKTIELKRAVYYSRSRQRLWFKGEESGHVQHVHEVRLDCDEDVVLLKVEQVEGIACHTGRRSCFFQKFEGTVDDGEWVAVDPVLKDPEHIYK.

Aspartate 84 provides a ligand contact to Mg(2+). Cysteine 85 contacts Zn(2+). Residues aspartate 86 and aspartate 88 each contribute to the Mg(2+) site. Cysteine 102 and cysteine 109 together coordinate Zn(2+).

This sequence belongs to the PRA-CH family. Homodimer. Mg(2+) serves as cofactor. The cofactor is Zn(2+).

It is found in the cytoplasm. The enzyme catalyses 1-(5-phospho-beta-D-ribosyl)-5'-AMP + H2O = 1-(5-phospho-beta-D-ribosyl)-5-[(5-phospho-beta-D-ribosylamino)methylideneamino]imidazole-4-carboxamide. The protein operates within amino-acid biosynthesis; L-histidine biosynthesis; L-histidine from 5-phospho-alpha-D-ribose 1-diphosphate: step 3/9. Catalyzes the hydrolysis of the adenine ring of phosphoribosyl-AMP. This is Phosphoribosyl-AMP cyclohydrolase from Burkholderia pseudomallei (strain K96243).